A 633-amino-acid polypeptide reads, in one-letter code: Pesticidal crystal protein Cry2Ad (633 aa).

The protein belongs to the delta endotoxin family.

Functionally, promotes colloidosmotic lysis by binding to the midgut epithelial cells of insects. The protein is Pesticidal crystal protein Cry2Ad (cry2Ad) of Bacillus thuringiensis.